The sequence spans 158 residues: S-ribosylhomocysteine lyase (158 aa).

Positions 54, 58, and 125 each coordinate Fe cation.

This sequence belongs to the LuxS family. In terms of assembly, homodimer. It depends on Fe cation as a cofactor.

The catalysed reaction is S-(5-deoxy-D-ribos-5-yl)-L-homocysteine = (S)-4,5-dihydroxypentane-2,3-dione + L-homocysteine. Its function is as follows. Involved in the synthesis of autoinducer 2 (AI-2) which is secreted by bacteria and is used to communicate both the cell density and the metabolic potential of the environment. The regulation of gene expression in response to changes in cell density is called quorum sensing. Catalyzes the transformation of S-ribosylhomocysteine (RHC) to homocysteine (HC) and 4,5-dihydroxy-2,3-pentadione (DPD). The polypeptide is S-ribosylhomocysteine lyase (Lactococcus lactis subsp. cremoris (strain MG1363)).